A 338-amino-acid polypeptide reads, in one-letter code: Ribosomal RNA small subunit methyltransferase H (338 aa).

S-adenosyl-L-methionine-binding positions include Gly-53 to His-55, Asp-72, Tyr-99, Asp-123, and Gln-130. Residues Ile-277 to Pro-298 are disordered.

Belongs to the methyltransferase superfamily. RsmH family.

The protein resides in the cytoplasm. The enzyme catalyses cytidine(1402) in 16S rRNA + S-adenosyl-L-methionine = N(4)-methylcytidine(1402) in 16S rRNA + S-adenosyl-L-homocysteine + H(+). In terms of biological role, specifically methylates the N4 position of cytidine in position 1402 (C1402) of 16S rRNA. This is Ribosomal RNA small subunit methyltransferase H from Rhodococcus opacus (strain B4).